A 95-amino-acid polypeptide reads, in one-letter code: Selenoprotein K (95 aa).

A helical membrane pass occupies residues 20–42 (LSFLTDMFWGITDFVVMFFQSII). Positions 47–95 (TRRGCQNSSSSTRYDDGRGPPGHPRRMGRINHGSGPSAPPMAGGGGUGR) are disordered. Residue Sec93 is a non-standard amino acid, selenocysteine.

This sequence belongs to the selenoprotein K family.

The protein localises to the endoplasmic reticulum membrane. It localises to the cell membrane. Required for Ca(2+) flux in immune cells and plays a role in T-cell proliferation and in T-cell and neutrophil migration. Involved in endoplasmic reticulum-associated degradation (ERAD) of soluble glycosylated proteins. Required for cell surface expression of CD36 and involved in macrophage uptake of low-density lipoprotein and in foam cell formation. Required for palmitoylation. This chain is Selenoprotein K (selenok), found in Xenopus laevis (African clawed frog).